Reading from the N-terminus, the 212-residue chain is External core antigen (212 aa).

Positions 1-19 (MQLFHLCLIISCSCPTVQA) are cleaved as a signal peptide. An HBEAG region spans residues 25–27 (GWL). Residues 165 to 212 (NAPILSTLPETTVVRRRGRSPRRRTPSPRRRRSQSPRRRRSQSRESQC) are disordered. Positions 178-205 (VRRRGRSPRRRTPSPRRRRSQSPRRRRS) are enriched in basic residues. One copy of the 1; half-length repeat lies at 184–190 (SPRRRTP). Residues 184–206 (SPRRRTPSPRRRRSQSPRRRRSQ) are 3 X 8 AA repeats of S-P-R-R-R-R-S-Q. A propeptide spanning residues 184 to 212 (SPRRRTPSPRRRRSQSPRRRRSQSRESQC) is cleaved from the precursor. 2 tandem repeats follow at residues 191–198 (SPRRRRSQ) and 199–206 (SPRRRRSQ).

Belongs to the orthohepadnavirus precore antigen family. Homodimerizes. Post-translationally, phosphorylated. In terms of processing, cleaved by host furin.

Its subcellular location is the secreted. The protein resides in the host nucleus. Its function is as follows. May regulate immune response to the intracellular capsid in acting as a T-cell tolerogen, by having an immunoregulatory effect which prevents destruction of infected cells by cytotoxic T-cells. This immune regulation may predispose to chronicity during perinatal infections and prevent severe liver injury during adult infections. The polypeptide is External core antigen (Homo sapiens (Human)).